A 462-amino-acid polypeptide reads, in one-letter code: Sensor histidine kinase RegB (462 aa).

Residues 1 to 25 (MILGPDGILNRDTRGDWWRLRTLIL) are Cytoplasmic-facing. Residues 26-45 (LRWMAVAGQLAAIVVTDWYL) traverse the membrane as a helical segment. At 46–51 (GVRLPM) the chain is on the extracellular side. Residues 52–70 (GLCFMAVGASVIANVIATF) traverse the membrane as a helical segment. At 71–78 (VFPQNRRL) the chain is on the cytoplasmic side. Residues 79-96 (TEFQALMILLFDLTQLSF) traverse the membrane as a helical segment. Over 97 to 103 (LLFLTGG) the chain is Extracellular. The helical transmembrane segment at 104-123 (LTNPFALLILAPVTISGVAL) threads the bilayer. The Cytoplasmic segment spans residues 124-129 (DVRTTV). A helical membrane pass occupies residues 130–149 (ILGAIAIGLLTFTAYFHLPL). Residues 150 to 164 (ILADGSSLSVPRMFE) are Extracellular-facing. Residues 165 to 182 (FGFWLAIVIGILFLGLYS) form a helical membrane-spanning segment. The Cytoplasmic portion of the chain corresponds to 183–462 (RRVAIEIRSM…PLGENVLIQT (280 aa)). The Histidine kinase domain maps to 218–445 (AAAHELGTPL…IVEVIWPVDR (228 aa)). Position 221 is a phosphohistidine; by autocatalysis (His-221).

Its subcellular location is the cell inner membrane. The catalysed reaction is ATP + protein L-histidine = ADP + protein N-phospho-L-histidine.. Its function is as follows. Member of the two-component regulatory system RegB/RegA. Involved in the positive regulation of photosynthesis gene expression in response to anaerobiosis. Also involved in positive regulation of the cbbI and cbbII Calvin cycle CO2 fixation operons, as well as in regulation of expression of genes involved in alternative CO2 fixation pathways. Phosphorylates RegA/PrrA. The polypeptide is Sensor histidine kinase RegB (regB) (Cereibacter sphaeroides (Rhodobacter sphaeroides)).